The primary structure comprises 539 residues: CTP synthase (539 aa).

The interval 1 to 267 is amidoligase domain; it reads MTKYIFVTGG…DQKVCDFLHL (267 aa). S13 is a binding site for CTP. Residue S13 participates in UTP binding. 14–19 provides a ligand contact to ATP; it reads SLGKGI. L-glutamine is bound at residue Y54. D71 lines the ATP pocket. Mg(2+) is bound by residues D71 and E141. CTP contacts are provided by residues 148-150, 188-193, and K224; these read DIE and KTKPTQ. UTP-binding positions include 188-193 and K224; that span reads KTKPTQ. The Glutamine amidotransferase type-1 domain occupies 294–537; the sequence is KITLVGKYVE…IGAASGLPAQ (244 aa). G356 is an L-glutamine binding site. Catalysis depends on C383, which acts as the Nucleophile; for glutamine hydrolysis. L-glutamine is bound by residues 384–387, E407, and R465; that span reads LGMQ. Residues H510 and E512 contribute to the active site.

Belongs to the CTP synthase family. As to quaternary structure, homotetramer.

The catalysed reaction is UTP + L-glutamine + ATP + H2O = CTP + L-glutamate + ADP + phosphate + 2 H(+). It carries out the reaction L-glutamine + H2O = L-glutamate + NH4(+). The enzyme catalyses UTP + NH4(+) + ATP = CTP + ADP + phosphate + 2 H(+). Its pathway is pyrimidine metabolism; CTP biosynthesis via de novo pathway; CTP from UDP: step 2/2. With respect to regulation, allosterically activated by GTP, when glutamine is the substrate; GTP has no effect on the reaction when ammonia is the substrate. The allosteric effector GTP functions by stabilizing the protein conformation that binds the tetrahedral intermediate(s) formed during glutamine hydrolysis. Inhibited by the product CTP, via allosteric rather than competitive inhibition. Functionally, catalyzes the ATP-dependent amination of UTP to CTP with either L-glutamine or ammonia as the source of nitrogen. Regulates intracellular CTP levels through interactions with the four ribonucleotide triphosphates. This Lactobacillus acidophilus (strain ATCC 700396 / NCK56 / N2 / NCFM) protein is CTP synthase.